A 122-amino-acid polypeptide reads, in one-letter code: Small ribosomal subunit protein uS13 (122 aa).

The disordered stretch occupies residues 89–122 (GLRHRRGLPARGQRTKTNARTRKGPRRGVAGKRK).

This sequence belongs to the universal ribosomal protein uS13 family. As to quaternary structure, part of the 30S ribosomal subunit. Forms a loose heterodimer with protein S19. Forms two bridges to the 50S subunit in the 70S ribosome.

Its function is as follows. Located at the top of the head of the 30S subunit, it contacts several helices of the 16S rRNA. In the 70S ribosome it contacts the 23S rRNA (bridge B1a) and protein L5 of the 50S subunit (bridge B1b), connecting the 2 subunits; these bridges are implicated in subunit movement. Contacts the tRNAs in the A and P-sites. This chain is Small ribosomal subunit protein uS13, found in Oleidesulfovibrio alaskensis (strain ATCC BAA-1058 / DSM 17464 / G20) (Desulfovibrio alaskensis).